Here is a 319-residue protein sequence, read N- to C-terminus: Translocon-associated protein subunit alpha (319 aa).

The N-terminal stretch at 1 to 21 (MRLLPRLLLLFLLAFPAAVLL) is a signal peptide. The Lumenal segment spans residues 22 to 208 (RGGPGGSLAV…EREDGLDGET (187 aa)). Acidic residues predominate over residues 35–76 (LTEDEETVEDPIIEDEDDEAEVEEDEPTDLAEEKEEEEDVSS). The segment at 35–84 (LTEDEETVEDPIIEDEDDEAEVEEDEPTDLAEEKEEEEDVSSEPEASPSA) is disordered. Asn137 and Asn192 each carry an N-linked (GlcNAc...) asparagine glycan. The helical transmembrane segment at 209-229 (IFMYMFLAGLGLLVVVGLHQL) threads the bilayer. The Cytoplasmic portion of the chain corresponds to 230–319 (LESRKRKRPI…SLRQLAVCGI (90 aa)). The residue at position 248 (Ser248) is a Phosphoserine. Thr261 carries the post-translational modification Phosphothreonine.

The protein belongs to the TRAP-alpha family. Heterotetramer of TRAP-alpha, TRAP-beta, TRAP-delta and TRAP-gamma. Interacts with palmitoylated calnexin (CALX), the interaction is required for efficient folding of glycosylated proteins.

The protein resides in the endoplasmic reticulum membrane. In terms of biological role, TRAP proteins are part of a complex whose function is to bind calcium to the ER membrane and thereby regulate the retention of ER resident proteins. May be involved in the recycling of the translocation apparatus after completion of the translocation process or may function as a membrane-bound chaperone facilitating folding of translocated proteins. The polypeptide is Translocon-associated protein subunit alpha (Ssr1) (Rattus norvegicus (Rat)).